A 280-amino-acid polypeptide reads, in one-letter code: Pantothenate synthetase (280 aa).

An ATP-binding site is contributed by 31–38 (MGNLHAGH). The Proton donor role is filled by His-38. (R)-pantoate is bound at residue Gln-62. Gln-62 is a beta-alanine binding site. 150–153 (GKKD) contacts ATP. Gln-156 is a (R)-pantoate binding site. ATP is bound by residues Val-179 and 187–190 (MSSR).

This sequence belongs to the pantothenate synthetase family. In terms of assembly, homodimer.

The protein localises to the cytoplasm. The enzyme catalyses (R)-pantoate + beta-alanine + ATP = (R)-pantothenate + AMP + diphosphate + H(+). The protein operates within cofactor biosynthesis; (R)-pantothenate biosynthesis; (R)-pantothenate from (R)-pantoate and beta-alanine: step 1/1. Its function is as follows. Catalyzes the condensation of pantoate with beta-alanine in an ATP-dependent reaction via a pantoyl-adenylate intermediate. The sequence is that of Pantothenate synthetase from Xanthomonas euvesicatoria pv. vesicatoria (strain 85-10) (Xanthomonas campestris pv. vesicatoria).